Here is an 830-residue protein sequence, read N- to C-terminus: DNA gyrase subunit A (830 aa).

Positions 34 to 514 (LPDVRDGLKP…NHSDINMEDL (481 aa)) constitute a Topo IIA-type catalytic domain. Tyr-122 functions as the O-(5'-phospho-DNA)-tyrosine intermediate in the catalytic mechanism. Residues 541–547 (QRRGGKG) carry the GyrA-box motif.

This sequence belongs to the type II topoisomerase GyrA/ParC subunit family. In terms of assembly, heterotetramer, composed of two GyrA and two GyrB chains. In the heterotetramer, GyrA contains the active site tyrosine that forms a transient covalent intermediate with DNA, while GyrB binds cofactors and catalyzes ATP hydrolysis.

It is found in the cytoplasm. The catalysed reaction is ATP-dependent breakage, passage and rejoining of double-stranded DNA.. In terms of biological role, a type II topoisomerase that negatively supercoils closed circular double-stranded (ds) DNA in an ATP-dependent manner to modulate DNA topology and maintain chromosomes in an underwound state. Negative supercoiling favors strand separation, and DNA replication, transcription, recombination and repair, all of which involve strand separation. Also able to catalyze the interconversion of other topological isomers of dsDNA rings, including catenanes and knotted rings. Type II topoisomerases break and join 2 DNA strands simultaneously in an ATP-dependent manner. The sequence is that of DNA gyrase subunit A from Buchnera aphidicola subsp. Acyrthosiphon pisum (strain APS) (Acyrthosiphon pisum symbiotic bacterium).